A 404-amino-acid chain; its full sequence is Serine/threonine transporter SstT (404 aa).

8 helical membrane passes run Ile-10–Ala-30, Ala-53–Gly-73, Ile-81–Tyr-101, Ala-140–Leu-160, Ala-177–Val-197, Leu-215–Val-235, Ile-287–Leu-307, and Ile-329–Ile-349.

The protein belongs to the dicarboxylate/amino acid:cation symporter (DAACS) (TC 2.A.23) family.

Its subcellular location is the cell inner membrane. The catalysed reaction is L-serine(in) + Na(+)(in) = L-serine(out) + Na(+)(out). It carries out the reaction L-threonine(in) + Na(+)(in) = L-threonine(out) + Na(+)(out). Its function is as follows. Involved in the import of serine and threonine into the cell, with the concomitant import of sodium (symport system). The protein is Serine/threonine transporter SstT of Glaesserella parasuis serovar 5 (strain SH0165) (Haemophilus parasuis).